The sequence spans 106 residues: MRKIRQGDDVVIIAGKDKGRRGRVIRVYPDQEKLLVENVNVVKRHRKGNPQQGEAGGIIEQEKPIHQSNVALYNPATEKGDRVGIRVLEDGSKARYFKSNNELVDG.

Belongs to the universal ribosomal protein uL24 family. In terms of assembly, part of the 50S ribosomal subunit.

Its function is as follows. One of two assembly initiator proteins, it binds directly to the 5'-end of the 23S rRNA, where it nucleates assembly of the 50S subunit. In terms of biological role, one of the proteins that surrounds the polypeptide exit tunnel on the outside of the subunit. The sequence is that of Large ribosomal subunit protein uL24 from Alkalilimnicola ehrlichii (strain ATCC BAA-1101 / DSM 17681 / MLHE-1).